A 109-amino-acid chain; its full sequence is MDAQGDAGAQGGSQGGPRPSNKRLQQTQAQVDEVVGIMKVNVEKVLERDQKLSQLDDRADALQEGASQFEKSAATLKRKYWWKNIKMMIIMCAIVVILIIIIVLWAGGK.

Residues Met1–Gln26 form a disordered region. Residues Met1–Lys86 are Cytoplasmic-facing. A v-SNARE coiled-coil homology domain is found at Arg23–Lys83. The helical; Anchor for type IV membrane protein transmembrane segment at Met87 to Gly107 threads the bilayer. Topologically, residues Gly108 to Lys109 are extracellular.

The protein belongs to the synaptobrevin family. Part of the SNARE core complex containing ric-4/SNAP25, snb-1/VAMP2 and unc-64/STX1A. This complex binds to cpx-1/CPLX1. As to expression, expressed in the nervous system notably the nerve ring, ventral cord and dorsal cord.

It localises to the cytoplasmic vesicle. The protein localises to the secretory vesicle. It is found in the synaptic vesicle membrane. Its subcellular location is the cell membrane. The protein resides in the synapse. It localises to the synaptosome. Its function is as follows. Involved in the targeting and/or fusion of transport vesicles to their target membrane. Acts in neuronal exocytosis of synaptic transmission. Likely to have a role in cholinergic transmisson. Required for viability, coordinated movement and M3 pharynx motor neuron function. This is Synaptobrevin-1 from Caenorhabditis elegans.